Consider the following 324-residue polypeptide: Zinc finger C2HC domain-containing protein 1A (324 aa).

A C2HC/C3H-type 1 zinc finger spans residues 15-44 (ELLPCKICGRTFFPVALKKHGPICKKTATK). Zn(2+) contacts are provided by Cys-19, Cys-22, His-34, and Cys-38. The segment at 43–83 (TKKRKTFDSSRQRAEGTDIPTVKPLKPRPEPPKKPSNWRRK) is disordered. Residues 48 to 58 (TFDSSRQRAEG) show a composition bias toward basic and acidic residues. The C2HC/C3H-type 2 zinc-finger motif lies at 118–147 (DYIQCPYCQRRFNENAADRHINFCKEQAAR). Residues Cys-122, Cys-125, His-137, and Cys-141 each coordinate Zn(2+). 2 disordered regions span residues 150-224 (NKGK…LSPS) and 236-259 (NVKP…LTNK). Low complexity-rich tracts occupy residues 176 to 187 (SNSPGTASSGSS) and 196 to 215 (GKTV…SSLG). Phosphoserine is present on Ser-222. The residue at position 243 (Thr-243) is a Phosphothreonine. Ser-291 is modified (phosphoserine).

It belongs to the ZC2HC1 family. Requires Zn(2+) as cofactor.

The protein is Zinc finger C2HC domain-containing protein 1A (ZC2HC1A) of Pongo abelii (Sumatran orangutan).